A 175-amino-acid chain; its full sequence is RNA pyrophosphohydrolase (175 aa).

Residues 6–149 (GYRPNVGIVI…KRDVYRRVMK (144 aa)) form the Nudix hydrolase domain. Positions 38–59 (GGINPGETAEQAMYRELFEEVG) match the Nudix box motif.

The protein belongs to the Nudix hydrolase family. RppH subfamily. The cofactor is a divalent metal cation.

Its function is as follows. Accelerates the degradation of transcripts by removing pyrophosphate from the 5'-end of triphosphorylated RNA, leading to a more labile monophosphorylated state that can stimulate subsequent ribonuclease cleavage. This chain is RNA pyrophosphohydrolase, found in Serratia proteamaculans (strain 568).